A 481-amino-acid chain; its full sequence is Ribosomal RNA small subunit methyltransferase F (481 aa).

S-adenosyl-L-methionine-binding positions include 125 to 131 (AAAPGSK), glutamate 149, aspartate 176, and aspartate 194. Residue cysteine 247 is the Nucleophile of the active site.

Belongs to the class I-like SAM-binding methyltransferase superfamily. RsmB/NOP family.

The protein localises to the cytoplasm. It carries out the reaction cytidine(1407) in 16S rRNA + S-adenosyl-L-methionine = 5-methylcytidine(1407) in 16S rRNA + S-adenosyl-L-homocysteine + H(+). Functionally, specifically methylates the cytosine at position 1407 (m5C1407) of 16S rRNA. The chain is Ribosomal RNA small subunit methyltransferase F from Psychromonas ingrahamii (strain DSM 17664 / CCUG 51855 / 37).